The chain runs to 677 residues: DNA ligase (677 aa).

NAD(+) is bound by residues 38 to 42 (DSVYD), 87 to 88 (SL), and Glu-119. Lys-121 acts as the N6-AMP-lysine intermediate in catalysis. NAD(+)-binding residues include Arg-142, Glu-179, Lys-296, and Lys-320. Residues Cys-414, Cys-417, Cys-432, and Cys-438 each coordinate Zn(2+). The region spanning 595-677 (VVKSEIAGKT…LKLLKSKGVF (83 aa)) is the BRCT domain.

This sequence belongs to the NAD-dependent DNA ligase family. LigA subfamily. Mg(2+) is required as a cofactor. Requires Mn(2+) as cofactor.

It catalyses the reaction NAD(+) + (deoxyribonucleotide)n-3'-hydroxyl + 5'-phospho-(deoxyribonucleotide)m = (deoxyribonucleotide)n+m + AMP + beta-nicotinamide D-nucleotide.. DNA ligase that catalyzes the formation of phosphodiester linkages between 5'-phosphoryl and 3'-hydroxyl groups in double-stranded DNA using NAD as a coenzyme and as the energy source for the reaction. It is essential for DNA replication and repair of damaged DNA. The polypeptide is DNA ligase (Coxiella burnetii (strain CbuG_Q212) (Coxiella burnetii (strain Q212))).